The following is a 265-amino-acid chain: Small ribosomal subunit protein uS2 (265 aa).

The interval 226–265 is disordered; that stretch reads AAAPNSASVREEEFSAESADEGKGRRAPAKKGDKKADAAE. The span at 245–265 shows a compositional bias: basic and acidic residues; that stretch reads DEGKGRRAPAKKGDKKADAAE.

The protein belongs to the universal ribosomal protein uS2 family.

This is Small ribosomal subunit protein uS2 from Xanthomonas euvesicatoria pv. vesicatoria (strain 85-10) (Xanthomonas campestris pv. vesicatoria).